Here is a 351-residue protein sequence, read N- to C-terminus: Heat shock factor protein HSF30 (351 aa).

Residues 29–123 mediate DNA binding; that stretch reads PPPFLSKTYE…LLKTIKRRRN (95 aa).

Belongs to the HSF family. In terms of assembly, homotrimer. In terms of processing, exhibits temperature-dependent phosphorylation.

It is found in the nucleus. DNA-binding protein that specifically binds heat shock promoter elements (HSE) and activates transcription. The chain is Heat shock factor protein HSF30 (HSF30) from Solanum peruvianum (Peruvian tomato).